A 169-amino-acid polypeptide reads, in one-letter code: Endoribonuclease YbeY (169 aa).

Residues His-128, His-132, and His-138 each contribute to the Zn(2+) site.

Belongs to the endoribonuclease YbeY family. It depends on Zn(2+) as a cofactor.

The protein resides in the cytoplasm. Functionally, single strand-specific metallo-endoribonuclease involved in late-stage 70S ribosome quality control and in maturation of the 3' terminus of the 16S rRNA. The chain is Endoribonuclease YbeY from Rhizorhabdus wittichii (strain DSM 6014 / CCUG 31198 / JCM 15750 / NBRC 105917 / EY 4224 / RW1) (Sphingomonas wittichii).